A 130-amino-acid chain; its full sequence is Protein ApaG (130 aa).

The ApaG domain occupies serine 3–proline 127.

This is Protein ApaG from Paramagnetospirillum magneticum (strain ATCC 700264 / AMB-1) (Magnetospirillum magneticum).